The chain runs to 381 residues: Estradiol 17-beta-dehydrogenase 2 (381 aa).

Residues 4–24 traverse the membrane as a helical; Signal-anchor for type II membrane protein segment; the sequence is FSSESAWLCLTATAVLGGMLL. 83–112 lines the NAD(+) pocket; sequence QKAVLVTGADSGFGHALAKHLDKLGFTVFA. Ser-220 provides a ligand contact to substrate. Tyr-233 acts as the Proton acceptor in catalysis.

This sequence belongs to the short-chain dehydrogenases/reductases (SDR) family. In terms of assembly, homodimer. As to expression, highly expressed in the placenta, and in the small intestine, and liver.

It localises to the endoplasmic reticulum membrane. It catalyses the reaction 17beta-estradiol + NAD(+) = estrone + NADH + H(+). The enzyme catalyses testosterone + NAD(+) = androst-4-ene-3,17-dione + NADH + H(+). It carries out the reaction 17beta-hydroxy-5alpha-androstan-3-one + NAD(+) = 5alpha-androstan-3,17-dione + NADH + H(+). The catalysed reaction is (20S)-hydroxypregn-4-en-3-one + NAD(+) = progesterone + NADH + H(+). In terms of biological role, catalyzes the NAD-dependent oxidation of highly active 17beta-hydroxysteroids, such as estradiol (E2), testosterone (T), and dihydrotestosterone (DHT), to their less active forms and thus regulates the biological potency of these steroids. Oxidizes estradiol to estrone, testosterone to androstenedione, and dihydrotestosterone to 5alpha-androstan-3,17-dione. Also has 20-alpha-HSD activity. The chain is Estradiol 17-beta-dehydrogenase 2 (Hsd17b2) from Rattus norvegicus (Rat).